The primary structure comprises 325 residues: Casein kinase I isoform alpha (325 aa).

A2 bears the N-acetylalanine mark. S4 is subject to Phosphoserine. K8 bears the N6-acetyllysine mark. The region spanning 17-285 (YKLVRKIGSG…YLRQLFRILF (269 aa)) is the Protein kinase domain. ATP contacts are provided by residues 23-31 (IGSGSFGDI) and K46. D136 functions as the Proton acceptor in the catalytic mechanism. I156 bears the Phosphoserine mark.

It belongs to the protein kinase superfamily. CK1 Ser/Thr protein kinase family. Casein kinase I subfamily. As to quaternary structure, interacts with the Axin complex. Interacts with TUT1, leading to TUT1 phosphorylation. Interacts with FAM83A, FAM83B, FAM83C, FAM83D, FAM83E, FAM83F, FAM83G and FAM83H (via DUF1669). Interaction with FAM83H recruits CSNK1A1 to keratin filaments. In terms of processing, phosphorylated by MTOR in response to mitogenic stimulation, leading to its activation.

Its subcellular location is the cytoplasm. The protein localises to the cytoskeleton. It is found in the microtubule organizing center. It localises to the centrosome. The protein resides in the chromosome. Its subcellular location is the centromere. The protein localises to the kinetochore. It is found in the nucleus speckle. It localises to the cilium basal body. The protein resides in the spindle. The catalysed reaction is L-seryl-[protein] + ATP = O-phospho-L-seryl-[protein] + ADP + H(+). It catalyses the reaction L-threonyl-[protein] + ATP = O-phospho-L-threonyl-[protein] + ADP + H(+). In terms of biological role, casein kinases are operationally defined by their preferential utilization of acidic proteins such as caseins as substrates. Can phosphorylate a large number of proteins. Participates in Wnt signaling. Phosphorylates CTNNB1 at 'Ser-45'. May phosphorylate PER1 and PER2. May play a role in segregating chromosomes during mitosis. May play a role in keratin cytoskeleton disassembly and thereby, it may regulate epithelial cell migration. Acts as a positive regulator of mTORC1 and mTORC2 signaling in response to nutrients by mediating phosphorylation of DEPTOR inhibitor. Acts as an inhibitor of NLRP3 inflammasome assembly by mediating phosphorylation of NLRP3. The sequence is that of Casein kinase I isoform alpha (Csnk1a1) from Rattus norvegicus (Rat).